The chain runs to 100 residues: Large ribosomal subunit protein uL23 (100 aa).

The protein belongs to the universal ribosomal protein uL23 family. As to quaternary structure, part of the 50S ribosomal subunit. Contacts protein L29, and trigger factor when it is bound to the ribosome.

One of the early assembly proteins it binds 23S rRNA. One of the proteins that surrounds the polypeptide exit tunnel on the outside of the ribosome. Forms the main docking site for trigger factor binding to the ribosome. The chain is Large ribosomal subunit protein uL23 from Mycobacterium leprae (strain Br4923).